Consider the following 236-residue polypeptide: Small ribosomal subunit protein uS2c (236 aa).

The protein belongs to the universal ribosomal protein uS2 family.

The protein resides in the plastid. Its subcellular location is the chloroplast. In Cucumis sativus (Cucumber), this protein is Small ribosomal subunit protein uS2c (rps2).